Here is a 426-residue protein sequence, read N- to C-terminus: MLDPKLVRTQPQEVAARLATRGFQLDVARIEALEEQRKSVQTRTEQLQAERNARSKAIGQAKQRGEDIAPLLADVDRMGSELEEGKRQLDAIQGELDSMLLGIPNLPHESVPVGADEDANVEVRRWGMPKTFDFEVKDHVALGERHGWLDFETAAKLSGARFALMRGPIARLHRALAQFMINLHTAEHGYEEAYTPYLVQAPALQGTGQLPKFEEDLFKIGRDGEADLYLIPTAEVSLTNIVSGQILDARQLPLKFVAHTPCFRSEAGASGRDTRGMIRQHQFDKVEMVQIVDPATSYEALEGLTANAERVLQLLELPYRVLALCTGDMGFGATKTYDLEVWVPSQDKYREISSCSNCGDFQARRMQARYRNPETGKPELVHTLNGSGLAVGRTLVAVLENYQQADGSIRVPDVLKPYMGGIEVIG.

Residue 233-235 (TAE) participates in L-serine binding. 264–266 (RSE) contributes to the ATP binding site. E287 lines the L-serine pocket. 351–354 (EISS) provides a ligand contact to ATP. Residue S387 coordinates L-serine.

Belongs to the class-II aminoacyl-tRNA synthetase family. Type-1 seryl-tRNA synthetase subfamily. As to quaternary structure, homodimer. The tRNA molecule binds across the dimer.

The protein localises to the cytoplasm. The enzyme catalyses tRNA(Ser) + L-serine + ATP = L-seryl-tRNA(Ser) + AMP + diphosphate + H(+). It carries out the reaction tRNA(Sec) + L-serine + ATP = L-seryl-tRNA(Sec) + AMP + diphosphate + H(+). The protein operates within aminoacyl-tRNA biosynthesis; selenocysteinyl-tRNA(Sec) biosynthesis; L-seryl-tRNA(Sec) from L-serine and tRNA(Sec): step 1/1. Its function is as follows. Catalyzes the attachment of serine to tRNA(Ser). Is also able to aminoacylate tRNA(Sec) with serine, to form the misacylated tRNA L-seryl-tRNA(Sec), which will be further converted into selenocysteinyl-tRNA(Sec). The polypeptide is Serine--tRNA ligase (Pseudomonas paraeruginosa (strain DSM 24068 / PA7) (Pseudomonas aeruginosa (strain PA7))).